The sequence spans 149 residues: CyanoQ (149 aa).

An N-terminal signal peptide occupies residues 1 to 21; sequence MSRLRSLLSLILVLVTTVLVS. Cys-22 is lipidated: N-palmitoyl cysteine. Cys-22 carries S-diacylglycerol cysteine lipidation.

Belongs to the PsbQ family. CyanoQ subfamily. In terms of assembly, PSII is composed of 1 copy each of membrane proteins PsbA, PsbB, PsbC, PsbD, PsbE, PsbF, PsbH, PsbI, PsbJ, PsbK, PsbL, PsbM, PsbT, PsbX, PsbY, PsbZ, Psb30/Ycf12, peripheral proteins PsbO, CyanoQ (PsbQ), PsbU, PsbV and a large number of cofactors. It forms dimeric complexes. Pull-down experiments with His-tagged PsbQ pull down dimeric, but not monomeric, PSII. The N-terminus is blocked. Upon expression in E.coli the N-terminus is modified with a diacylglycerol and an acyl group bound to two palmitates and one palmitoleate.

It localises to the cellular thylakoid membrane. Functionally, one of the extrinsic, lumenal subunits of photosystem II (PSII), which stabilize and protect the oxygen-evolving complex. PSII is a light-driven water plastoquinone oxidoreductase, using light energy to abstract electrons from H(2)O, generating a proton gradient subsequently used for ATP formation. Plays a role in the stability of the oxygen-evolving center on the luminal side of PSII. Required for optimal photoautotrophic growth in the absence of Ca(2+) or Cl(-), functions in optimizing PSII water oxidation/O(2) evolving activity. Requires PsbO to bind to PSII. The polypeptide is CyanoQ (Synechocystis sp. (strain ATCC 27184 / PCC 6803 / Kazusa)).